Consider the following 158-residue polypeptide: Salt stress-responsive protein YocM (158 aa).

The sHSP domain occupies 51 to 158; the sequence is GKGDASFPSM…GQAKTIVIDD (108 aa).

It belongs to the small heat shock protein (HSP20) family. As to quaternary structure, forms homodimers, homotetramers and higher oligomers.

It localises to the cytoplasm. Its function is as follows. Part of the cellular protein quality control system with a specific role in salt stress response. May facilitate protein homeostasis, together with chemical chaperones that accumulate during the salt stress response. Increased levels of YocM protects against both heat and salt stress. In vitro, displays an unusual aggregase chaperone activity. The polypeptide is Salt stress-responsive protein YocM (yocM) (Bacillus subtilis (strain 168)).